The primary structure comprises 249 residues: MRYVIITGTSQGLGEAIATQLLEESTTVISISRRENKELTKLAEQYNSNCIFHSLDLQDVHNLETNFKEIISSIKEDNVSSIHLINNAGTVAPMKPIEKAESEQFITNVHINLLAPMILTSTFMKHTKEWKVDKRVINISSGAGKNPYFGWGAYCTTKAGVNMFTQCVATEEVEKEYPVKIVAFAPGVVDTNMQAQIRETAKEDFTNLDRFIALKEEGKLLSPEYVAKAIRNLLETEEFPQGEVIRIDE.

NADP(+) contacts are provided by Ile-6, Asn-87, Tyr-154, Lys-158, Val-189, and Thr-191. The active-site Proton acceptor is Tyr-154.

The protein belongs to the short-chain dehydrogenases/reductases (SDR) family.

The protein resides in the cytoplasm. The enzyme catalyses (S)-benzoin + NADP(+) = benzil + NADPH + H(+). The catalysed reaction is 2-hydroxy-1-phenyl-1-propanone + NADP(+) = 1-phenyl-1,2-propanedione + NADPH + H(+). With respect to regulation, inhibited by Cibacron blue 3GA, a general SDR family inhibitor. Functionally, reduces benzil stereospecifically to (S)-benzoin. Can also reduce 1-phenyl-1,2-propanedione, 1,4-naphthoquinone, 1-(4-methyl-phenyl)-2-phenyl-ethane-1,2-dione, 1-(4-fluoro-phenyl)-2-phenyl-ethane-1,2-dione, methyl benzoylformate and p-nitrobenzaldehyde in decreasing order. The chain is Benzil reductase ((S)-benzoin forming) from Bacillus cereus.